We begin with the raw amino-acid sequence, 298 residues long: Palmitoyl-protein thioesterase 1 (298 aa).

The signal sequence occupies residues 1 to 16 (MRYFPLLLCLLAITTA). Residue N20 is glycosylated (N-linked (GlcNAc...) asparagine). Cystine bridges form between C37–C38, C88–C120, and C144–C151. Catalysis depends on S107, which acts as the Nucleophile. D224 is an active-site residue. Residue N250 is glycosylated (N-linked (GlcNAc...) asparagine). H280 is an active-site residue.

Belongs to the palmitoyl-protein thioesterase family.

It catalyses the reaction S-hexadecanoyl-L-cysteinyl-[protein] + H2O = L-cysteinyl-[protein] + hexadecanoate + H(+). Its function is as follows. Removes thioester-linked fatty acyl groups such as palmitate (hexadecanoate) from modified cysteine residues in proteins or peptides. In Caenorhabditis elegans, this protein is Palmitoyl-protein thioesterase 1 (ppt-1).